A 377-amino-acid polypeptide reads, in one-letter code: MVTKPTTPKPPPALGIPDSAYTVDVRVIDTGTLLHLNPSLFWQPPIDGFTGLHAPIYCFLVSHGSQHVIFDLGVRTDWENYAPKIVSIIKATTTVTPGSDVPSMLDEDTSGLGIRSADIGAVIWSHNHFDHVGDVSRFPLTTDLIVGPGVRGVSWPGWPSNPDGIVLDSDVEGRVVREVSFEAGLKIGHFDAMDFFGDGSFYLLDAPGHAVGHLCALARTTANEPTFVFMGADACHHPGLLRPSNYLPLPSASTLAGVLTGPPQCPGELLQQLTLPDEPFFTVAPRMFPDHDAATDTVRKIQELDASDNCLVLIAHDLSLRDKIPLFPKTINGWKESQVKTETRWLFCNDFMPALHHLDNKQGIEEELGKQSSLKCS.

6 residues coordinate Zn(2+): histidine 126, histidine 128, aspartate 130, histidine 131, histidine 209, and aspartate 233.

The protein belongs to the metallo-beta-lactamase superfamily.

Its pathway is secondary metabolite biosynthesis; terpenoid biosynthesis. Functionally, metallo-hydrolase; part of the gene cluster that mediates the biosynthesis of the phthalide-terpenoid hybrid 11'-O-desmethylfendlerol. Within the pathway, mfma and mfmC act together to convert 3,5-dimethylorsellinic acid (DMOA) into the phthalide 5,7-dihydroxy-4-(hydroxymethyl)-6-methylphthalide. The biosynthesis of 11'-O-desmethylfendlerol begins with the NR-PKS mfmB that forms 3,5-dimethylorsellinic acid (DMOA), which is then transformed into the phthalide 5,7-dihydroxy-4-(hydroxymethyl)-6-methylphthalide by the cytochrome P450 monooxygenase mfmA and the hydrolase mfmC. Subsequently, the methyltransferase mfmE catalyzes 7-O-methylation to yield 5-hydroxy-4-(hydroxymethyl)-7-methoxy-6-methylphthalide, which undergoes C-3 hydroxylation by the cytochrome P450 monooxygenase mfmF. The resultant cyclopolic acid (2,5-dihydroxy-4-(hydroxymethyl)-7-methoxy-6-methylphthalide) is then farnesylated by the DMATS-type prenyltransferase mfmD to afford 5-O-farnesylcyclopolic acid. Finally, the Pyr4-family terpene cyclase mfmH cyclizes the farnesyl moiety of 5-O-farnesylcyclopolic acid into a drimane-like structure, thus completing the biosynthesis of 11'-O-desmethylfendlerol. The sequence is that of Metallo-hydrolase mfmC from Annulohypoxylon moriforme (Filamentous fungus).